The primary structure comprises 504 residues: Maturase K (504 aa).

It belongs to the intron maturase 2 family. MatK subfamily.

The protein localises to the plastid. It is found in the chloroplast. In terms of biological role, usually encoded in the trnK tRNA gene intron. Probably assists in splicing its own and other chloroplast group II introns. This Gossypium gossypioides (Mexican cotton) protein is Maturase K.